The chain runs to 59 residues: U-actitoxin-Aer2a (59 aa).

Post-translationally, contains 5 disulfide bonds.

It localises to the secreted. The protein localises to the nematocyst. The sequence is that of U-actitoxin-Aer2a from Anemonia erythraea (Sea anemone).